The primary structure comprises 382 residues: Galactokinase (382 aa).

34-37 (EHTD) contributes to the substrate binding site. 124-130 (GAGLSSS) is a binding site for ATP. Residues Ser130 and Glu162 each contribute to the Mg(2+) site. Asp174 (proton acceptor) is an active-site residue. Tyr223 contributes to the substrate binding site.

It belongs to the GHMP kinase family. GalK subfamily.

Its subcellular location is the cytoplasm. It carries out the reaction alpha-D-galactose + ATP = alpha-D-galactose 1-phosphate + ADP + H(+). Its pathway is carbohydrate metabolism; galactose metabolism. Its function is as follows. Catalyzes the transfer of the gamma-phosphate of ATP to D-galactose to form alpha-D-galactose-1-phosphate (Gal-1-P). The polypeptide is Galactokinase (Salmonella gallinarum (strain 287/91 / NCTC 13346)).